Here is a 629-residue protein sequence, read N- to C-terminus: DNA ligase B (629 aa).

Catalysis depends on Lys151, which acts as the N6-AMP-lysine intermediate. A compositionally biased stretch (polar residues) spans 588 to 597 (LQKQHGTNTR). The segment at 588-629 (LQKQHGTNTRNEQKGDVRRVDVKQDNGTTWLPEQDSNLRPND) is disordered. A compositionally biased stretch (basic and acidic residues) spans 598–611 (NEQKGDVRRVDVKQ). Residues 612-629 (DNGTTWLPEQDSNLRPND) are compositionally biased toward polar residues.

This sequence belongs to the NAD-dependent DNA ligase family. LigB subfamily.

The enzyme catalyses NAD(+) + (deoxyribonucleotide)n-3'-hydroxyl + 5'-phospho-(deoxyribonucleotide)m = (deoxyribonucleotide)n+m + AMP + beta-nicotinamide D-nucleotide.. Functionally, catalyzes the formation of phosphodiester linkages between 5'-phosphoryl and 3'-hydroxyl groups in double-stranded DNA using NAD as a coenzyme and as the energy source for the reaction. This is DNA ligase B from Chromohalobacter salexigens (strain ATCC BAA-138 / DSM 3043 / CIP 106854 / NCIMB 13768 / 1H11).